The primary structure comprises 637 residues: MPHMLYTEIPTQRPVTPLLDAIDHPQQLRQLEHSQLLQVADELRQYILYAAGQSGGHFGANLGVVELTVALHYCFNTPNDRLVWDVGHQAYPHKILTGRREQITTIRAKNGLAAFPAREESVFDTFGVGHSSTAISAGLGMSLARRYQKDPCEVVCIVGDGAMTAGMAFEAMNDAVAHDADLIVVLNDNDMSISCSTGGFAKHLAAIWEKGHLVNVNEHGEAYIQPHPKWTYNSRLHQSATDAADNLFKAIGFDYFGPFDGHDVTQLVQVFNALKKRKGPRLVHVYTKKGKGFAPAEADPITYHAIGKINAASGGKTPPKYSDVFGEWLCDEAAQDERLLAITPAMCEGSGMVKFAKQFPQRFFDVAIAEQHAVTLAAGMACEGLKPVVAIYSTFLQRGYDQLIHDVALQNLDVTFGIDRAGLVGEDGPTHAGAYDYAYMRTVPNMVIMAPKDENECRQMLHTAYAYNGPAAVRYPRGAGVGVEIQKEMTVLELGKAEIVAEIKANSDEQITVLAFGSRVMVALEAAEQFAQKHDVSVCIVNMRFVKPLDEQMIRDLAEHTHLFVTVEEHAIMGGAGSAVNEFMAQEQIVKPIINLGLPDSFLHQATHNQMLQDCGLDAKGILNSIERAWLKVNQVV.

Thiamine diphosphate-binding positions include H88 and 129–131 (GHS). A Mg(2+)-binding site is contributed by D160. Thiamine diphosphate-binding positions include 161-162 (GA), N189, F293, and E370. Residue N189 coordinates Mg(2+).

This sequence belongs to the transketolase family. DXPS subfamily. As to quaternary structure, homodimer. The cofactor is Mg(2+). Thiamine diphosphate serves as cofactor.

It catalyses the reaction D-glyceraldehyde 3-phosphate + pyruvate + H(+) = 1-deoxy-D-xylulose 5-phosphate + CO2. The protein operates within metabolic intermediate biosynthesis; 1-deoxy-D-xylulose 5-phosphate biosynthesis; 1-deoxy-D-xylulose 5-phosphate from D-glyceraldehyde 3-phosphate and pyruvate: step 1/1. Functionally, catalyzes the acyloin condensation reaction between C atoms 2 and 3 of pyruvate and glyceraldehyde 3-phosphate to yield 1-deoxy-D-xylulose-5-phosphate (DXP). The chain is 1-deoxy-D-xylulose-5-phosphate synthase from Acinetobacter baumannii (strain AYE).